The following is a 107-amino-acid chain: MVIRVFLASSSGFVAIKKKQQDVVRFLEANKIEFEEVDITMSEEQRQWMYKNIPPEKKPAQGNPLPPQIFNDDQYCGDYDSFFESKESNTVFSFLGLKSQLASKAES.

The short motif at 61-67 is the SH3-binding element; the sequence is QGNPLPP.

The protein belongs to the SH3BGR family.

Its subcellular location is the nucleus. This is SH3 domain-binding glutamic acid-rich-like protein 2 (SH3BGRL2) from Bos taurus (Bovine).